Here is a 522-residue protein sequence, read N- to C-terminus: Leucine-rich repeat transmembrane neuronal protein 1 (522 aa).

A signal peptide spans 1–34; that stretch reads MDFLLLGLCLYWLLRRPSGVVLCLLGACFQMLPA. Residues 35–63 form the LRRNT domain; sequence APSGCPQLCRCEGRLLYCEALNPTEAPHN. At 35–427 the chain is on the extracellular side; it reads APSGCPQLCR…HAENAVQIHK (393 aa). Asn63 carries an N-linked (GlcNAc...) asparagine glycan. LRR repeat units follow at residues 64-87, 89-111, 112-135, 137-159, 161-183, 184-207, 209-231, 233-255, 256-278, and 279-302; these read LSGL…QFTG, MQLT…AFQK, LRRV…TFRP, PNLR…LFHG, RKLT…IFQD, CRSL…SFAG, FKLT…HFPR, ISLH…LDWV, WNLK…VFET, and VPHL…ILNS. Asn130 carries N-linked (GlcNAc...) asparagine glycosylation. In terms of domain architecture, LRRCT spans 314 to 365; it reads NLWDCGRNVCALASWLSNFQGRYDGNLQCASPEYAQGEDVLDAVYAFHLCED. A glycan (N-linked (GlcNAc...) asparagine) is linked at Asn380. Residues 382–401 form a disordered region; that stretch reads SDLGPPASSATTLADGGEGQ. The helical transmembrane segment at 428 to 448 threads the bilayer; the sequence is VVTGTMALIFSFLIVVLVLYV. Over 449–522 the chain is Cytoplasmic; the sequence is SWKCFPASLR…HQQPARECEV (74 aa).

Belongs to the LRRTM family.

It localises to the cell membrane. The protein resides in the postsynaptic cell membrane. Functionally, exhibits strong synaptogenic activity, restricted to excitatory presynaptic differentiation, acting at both pre- and postsynaptic level. The polypeptide is Leucine-rich repeat transmembrane neuronal protein 1 (LRRTM1) (Pongo abelii (Sumatran orangutan)).